The sequence spans 164 residues: uncharacterized protein (164 aa).

Residues Met-1–Ala-22 form the signal peptide. A lipid anchor (N-palmitoyl cysteine) is attached at Cys-23. The S-diacylglycerol cysteine moiety is linked to residue Cys-23.

The protein resides in the cell membrane. This is an uncharacterized protein from Escherichia coli (strain K12).